The sequence spans 172 residues: Small ribosomal subunit protein uS5 (172 aa).

One can recognise an S5 DRBM domain in the interval 17–80; it reads MREKMIAVNR…EEARRKMIKV (64 aa).

It belongs to the universal ribosomal protein uS5 family. As to quaternary structure, part of the 30S ribosomal subunit. Contacts proteins S4 and S8.

In terms of biological role, with S4 and S12 plays an important role in translational accuracy. Located at the back of the 30S subunit body where it stabilizes the conformation of the head with respect to the body. The polypeptide is Small ribosomal subunit protein uS5 (Janthinobacterium sp. (strain Marseille) (Minibacterium massiliensis)).